Consider the following 400-residue polypeptide: Large envelope protein (400 aa).

The residue at position 1 (methionine 1) is an N-acetylmethionine. Glycine 2 carries the N-myristoyl glycine; by host lipid modification. A pre-S1 region spans residues 2 to 119 (GGWSSKPRQG…PPLRDSHPQA (118 aa)). Residues 2–174 (GGWSSKPRQG…FSRIGDPALN (173 aa)) form a pre-S region. The Virion surface; in external conformation portion of the chain corresponds to 2 to 181 (GGWSSKPRQG…ALNMENITSG (180 aa)). The Intravirion; in internal conformation segment spans residues 2–253 (GGWSSKPRQG…PGYRWMCLRR (252 aa)). Tryptophan 4 carries N-linked (GlcNAc...) asparagine glycosylation. The interval 85-118 (LTTVPAAPPPASSNRQSGKQPTPISPPLRDSHPQ) is disordered. Residues 96–106 (SSNRQSGKQPT) show a composition bias toward polar residues. Residues 120 to 174 (MQWNSTTFHQTLQDPRVRGLYFPAGGSSSGTVNPVPTTASPISSIFSRIGDPALN) form a pre-S2 region. A helical transmembrane segment spans residues 182-202 (FLGPLLVLQAGFFLLTRILTI). Residues 203–253 (PQSLDSWWTSLNFLGGTTVCLGQNSQSPISNHSPTSCPPTCPGYRWMCLRR) lie on the Intravirion; in external conformation side of the membrane. Residues 254-274 (FIIFLFILLLCLIFLLVLLDY) form a helical membrane-spanning segment. Over 275–348 (QGMLPVCPLI…WASARFSWLS (74 aa)) the chain is Virion surface. Asparagine 320 is a glycosylation site (N-linked (GlcNAc...) asparagine; by host). The chain crosses the membrane as a helical span at residues 349–369 (LLVPFVQWFVGLSPTVWLSVI). Over 370–375 (WMMWYW) the chain is Intravirion. The chain crosses the membrane as a helical span at residues 376–398 (GPSLYSILSPFLPLLPIFFCLWV). Residues 399–400 (YI) lie on the Virion surface side of the membrane.

It belongs to the orthohepadnavirus major surface antigen family. In terms of assembly, in its internal form (Li-HBsAg), interacts with the capsid protein and with the isoform S. Interacts with host chaperone CANX. As to quaternary structure, associates with host chaperone CANX through its pre-S2 N glycan; this association may be essential for isoform M proper secretion. Interacts with isoform L. Interacts with the antigens of satellite virus HDV (HDVAgs); this interaction is required for encapsidation of HDV genomic RNA. Isoform M is N-terminally acetylated by host at a ratio of 90%, and N-glycosylated by host at the pre-S2 region. In terms of processing, myristoylated.

It localises to the virion membrane. In terms of biological role, the large envelope protein exists in two topological conformations, one which is termed 'external' or Le-HBsAg and the other 'internal' or Li-HBsAg. In its external conformation the protein attaches the virus to cell receptors and thereby initiating infection. This interaction determines the species specificity and liver tropism. This attachment induces virion internalization predominantly through caveolin-mediated endocytosis. The large envelope protein also assures fusion between virion membrane and endosomal membrane. In its internal conformation the protein plays a role in virion morphogenesis and mediates the contact with the nucleocapsid like a matrix protein. The middle envelope protein plays an important role in the budding of the virion. It is involved in the induction of budding in a nucleocapsid independent way. In this process the majority of envelope proteins bud to form subviral lipoprotein particles of 22 nm of diameter that do not contain a nucleocapsid. The sequence is that of Large envelope protein from Homo sapiens (Human).